The chain runs to 25 residues: Flagellar filament outer layer protein (25 aa).

The flagellum consists of an outer layer composed of repeating units of FlaA around a core that contains several antigenically related polypeptides.

The protein localises to the periplasmic flagellum. It localises to the periplasm. Functionally, component of the outer layer of the flagella. In Treponema phagedenis, this protein is Flagellar filament outer layer protein (flaA).